A 439-amino-acid polypeptide reads, in one-letter code: Ribosomal protein uS12 methylthiotransferase RimO (439 aa).

The MTTase N-terminal domain occupies 2-114 (SKLYLMSLGC…VDEMILKKTN (113 aa)). The [4Fe-4S] cluster site is built by Cys11, Cys45, Cys77, Cys146, Cys150, and Cys153. In terms of domain architecture, Radical SAM core spans 132–363 (TGSNSHAFIK…VNEVIEKSFE (232 aa)).

The protein belongs to the methylthiotransferase family. RimO subfamily. The cofactor is [4Fe-4S] cluster.

It localises to the cytoplasm. The enzyme catalyses L-aspartate(89)-[ribosomal protein uS12]-hydrogen + (sulfur carrier)-SH + AH2 + 2 S-adenosyl-L-methionine = 3-methylsulfanyl-L-aspartate(89)-[ribosomal protein uS12]-hydrogen + (sulfur carrier)-H + 5'-deoxyadenosine + L-methionine + A + S-adenosyl-L-homocysteine + 2 H(+). In terms of biological role, catalyzes the methylthiolation of an aspartic acid residue of ribosomal protein uS12. The polypeptide is Ribosomal protein uS12 methylthiotransferase RimO (Campylobacter jejuni (strain RM1221)).